A 142-amino-acid polypeptide reads, in one-letter code: Hemoglobin subunit alpha-A (142 aa).

Residues 2-142 (VLSAADKTNV…VGTVLTAKYR (141 aa)) enclose the Globin domain. His59 serves as a coordination point for O2. Position 88 (His88) interacts with heme b.

It belongs to the globin family. Heterotetramer of two alpha chains and two beta chains. In terms of tissue distribution, red blood cells.

In terms of biological role, involved in oxygen transport from the lung to the various peripheral tissues. The chain is Hemoglobin subunit alpha-A (HBAA) from Coturnix japonica (Japanese quail).